The following is a 542-amino-acid chain: Phosphoenolpyruvate carboxykinase (ATP) (542 aa).

Arg67, Tyr208, and Lys214 together coordinate substrate. ATP-binding positions include Lys214, His233, and 249–257; that span reads GLSGTGKTT. Lys214 and His233 together coordinate Mn(2+). Residue Asp270 coordinates Mn(2+). ATP-binding positions include Glu298, Arg334, 450–451, and Thr456; that span reads RI. Arg334 lines the substrate pocket.

The protein belongs to the phosphoenolpyruvate carboxykinase (ATP) family. Monomer. The cofactor is Mn(2+).

The protein localises to the cytoplasm. The enzyme catalyses oxaloacetate + ATP = phosphoenolpyruvate + ADP + CO2. Its pathway is carbohydrate biosynthesis; gluconeogenesis. Its function is as follows. Involved in the gluconeogenesis. Catalyzes the conversion of oxaloacetate (OAA) to phosphoenolpyruvate (PEP) through direct phosphoryl transfer between the nucleoside triphosphate and OAA. This is Phosphoenolpyruvate carboxykinase (ATP) from Vibrio campbellii (strain ATCC BAA-1116).